The chain runs to 363 residues: MDIENNLQDLKKKFSDVERNLENPTNLSQKEFVSFSKEYSELRPIIEIIDEYNILKEEISDLEEIMKDENSDGDIKELAKEELLEKQKIVLPKVKAKLKLALLPKDEDDSRNAILEIRAGTGGEEAALFAAMLFRMYQKYAERRNWKFEPISISNTGIGGYKEASALINGTEVFARLKFESGVHRVQRVPETESSGRLHTSAATVAILPEVEEVDFEIEEKDLRIDVYRSSGPGGQSVNTTDSAVRVTHLPTGIVVIQQDEKSQHKNKAKALKVLRARLYEIERQKKEMERSTMRKSQIGSGDRSERIRTYNFPQSRITDHRINLTSHRLEQIIKEGELDEFIEALISRNEAERLTGGGNVTF.

The residue at position 236 (glutamine 236) is an N5-methylglutamine. Positions 286–305 (KKEMERSTMRKSQIGSGDRS) are disordered.

Belongs to the prokaryotic/mitochondrial release factor family. Methylated by PrmC. Methylation increases the termination efficiency of RF1.

It is found in the cytoplasm. Peptide chain release factor 1 directs the termination of translation in response to the peptide chain termination codons UAG and UAA. The sequence is that of Peptide chain release factor 1 from Wolbachia pipientis subsp. Culex pipiens (strain wPip).